The following is a 258-amino-acid chain: MILDKIFEKTKEDLKERKLKLPYDMLGRSLASNPFFPKDVIKALKRVEKEVKIIAEVKKASPSKGVIREDFDPLSIALNYEKNKATAISVLTEPHFFKGSLEYLSLIRRYTQIPLLRKDFIFDEYQILEALVYGADFVLLIAKMLSMKELKKLLEFARHLGLEALVEIHDKEDLSKAIFAGADIIGINHRNLEDFTMDMSLCEKLIPQIPNSKIIIAESGLENKEFLEHLQNLGVDAFLIGEYFMREEDEGKALKALL.

This sequence belongs to the TrpC family.

It catalyses the reaction 1-(2-carboxyphenylamino)-1-deoxy-D-ribulose 5-phosphate + H(+) = (1S,2R)-1-C-(indol-3-yl)glycerol 3-phosphate + CO2 + H2O. It participates in amino-acid biosynthesis; L-tryptophan biosynthesis; L-tryptophan from chorismate: step 4/5. This Campylobacter jejuni subsp. jejuni serotype O:23/36 (strain 81-176) protein is Indole-3-glycerol phosphate synthase.